The primary structure comprises 475 residues: NADH-quinone oxidoreductase subunit N (475 aa).

14 consecutive transmembrane segments (helical) span residues 5–25 (LALPEIVLALCGLAILVFGVV), 32–52 (FLSCSMLTIGAFVLTGFLVVM), 71–91 (FMKILSLAGGAFATMLTVGYA), 99–119 (FEFPVLLLFSTLGAMMMASSE), 121–141 (LMTLFIGLELSSLAIYILCAF), 155–175 (YFVLGSLASGLLLYGSSLVYG), 193–213 (STAVPMGLMFGIVFMLAGLTF), 232–252 (PTSVTAYMAGAPKFAAFALLL), 266–286 (WQILVEGVSMLSMLFGSLAAI), 294–314 (LMAYSSIGHMGYALMGLCAGT), 322–342 (LVYLTTYLLMNVGAFAVIIAM), 366–386 (ATAMAIFMFSMAGAPPLAGFF), 389–409 (MMVFYAAINAHLFGLAAIGVV), and 439–459 (LSLSFVSVGMGIATTGFLLVL).

This sequence belongs to the complex I subunit 2 family. NDH-1 is composed of 14 different subunits. Subunits NuoA, H, J, K, L, M, N constitute the membrane sector of the complex.

The protein resides in the cell inner membrane. It catalyses the reaction a quinone + NADH + 5 H(+)(in) = a quinol + NAD(+) + 4 H(+)(out). In terms of biological role, NDH-1 shuttles electrons from NADH, via FMN and iron-sulfur (Fe-S) centers, to quinones in the respiratory chain. The immediate electron acceptor for the enzyme in this species is believed to be ubiquinone. Couples the redox reaction to proton translocation (for every two electrons transferred, four hydrogen ions are translocated across the cytoplasmic membrane), and thus conserves the redox energy in a proton gradient. The sequence is that of NADH-quinone oxidoreductase subunit N from Gluconacetobacter diazotrophicus (strain ATCC 49037 / DSM 5601 / CCUG 37298 / CIP 103539 / LMG 7603 / PAl5).